A 161-amino-acid chain; its full sequence is Phosphopantetheine adenylyltransferase (161 aa).

Serine 9 contributes to the substrate binding site. Residues 9–10 and histidine 17 each bind ATP; that span reads SF. Lysine 41, threonine 73, and arginine 87 together coordinate substrate. Residues 88–90, glutamate 98, and 123–129 each bind ATP; these read GIR and YQYVSSS.

It belongs to the bacterial CoaD family. In terms of assembly, homohexamer. The cofactor is Mg(2+).

It localises to the cytoplasm. The catalysed reaction is (R)-4'-phosphopantetheine + ATP + H(+) = 3'-dephospho-CoA + diphosphate. It functions in the pathway cofactor biosynthesis; coenzyme A biosynthesis; CoA from (R)-pantothenate: step 4/5. Functionally, reversibly transfers an adenylyl group from ATP to 4'-phosphopantetheine, yielding dephospho-CoA (dPCoA) and pyrophosphate. The protein is Phosphopantetheine adenylyltransferase of Levilactobacillus brevis (strain ATCC 367 / BCRC 12310 / CIP 105137 / JCM 1170 / LMG 11437 / NCIMB 947 / NCTC 947) (Lactobacillus brevis).